Consider the following 522-residue polypeptide: Amphoterin-induced protein 2 (522 aa).

The signal sequence occupies residues 1-39 (MSLRVHTLPTLLGAVVRPGCRELLCLLMITVTVGPGASG). Residues 40–68 (VCPTACICATDIVSCTNKNLSKVPGNLFR) enclose the LRRNT domain. Over 40-398 (VCPTACICAT…RSHAHEAFNT (359 aa)) the chain is Extracellular. 2 cysteine pairs are disulfide-bonded: cysteine 41/cysteine 47 and cysteine 45/cysteine 54. N-linked (GlcNAc...) asparagine glycosylation occurs at asparagine 58. 6 LRR repeats span residues 69–90 (LIKRLDLSYNRIGLLDSEWIPV), 94–115 (KLNTLILRHNNITSISTGSFST), 118–139 (NLKCLDLSSNKLKTVKNAVFQE), 142–163 (VLEVLLLYNNHISYLDPSAFGG), 166–187 (QLQKLYLSGNFLTQFPMDLYVG), and 193–214 (ELMFLDVSYNRIPSMPMHHINL). N-linked (GlcNAc...) asparagine glycosylation occurs at asparagine 104. Residues 228–284 (NPFVCDCSLYSLLVFWYRRHFSSVMDFKNDYTCRLWSDSRHSRQVLLLQDSFMNCSD) enclose the LRRCT domain. Disulfide bonds link cysteine 232–cysteine 260 and cysteine 234–cysteine 282. N-linked (GlcNAc...) asparagine glycans are attached at residues asparagine 281, asparagine 288, asparagine 345, asparagine 373, asparagine 381, and asparagine 384. Residues 289–379 (GSFRALGFIH…RLLNETVDVT (91 aa)) enclose the Ig-like C2-type domain. A disulfide bond links cysteine 310 and cysteine 363. The helical transmembrane segment at 399 to 419 (AFTTLAACVASIVLVLLYLYL) threads the bilayer. Topologically, residues 420-522 (TPCPCKCKTK…FSDTPFVAST (103 aa)) are cytoplasmic. The segment at 501 to 522 (RGKSDSDSVNSVFSDTPFVAST) is disordered.

It belongs to the immunoglobulin superfamily. AMIGO family. As to quaternary structure, binds itself as well as AMIGO1 and AMIGO3. Highest levels in breast, ovary, cervix, and uterus. Lower levels in lung, colon, and rectum. Differentially expressed in 56% of thyroid, 57% of pancreatic and 45% of stomach cancers.

The protein localises to the cell membrane. Its subcellular location is the nucleus. In terms of biological role, required for depolarization-dependent survival of cultured cerebellar granule neurons. May mediate homophilic as well as heterophilic cell-cell interaction with AMIGO1 or AMIGO3. May contribute to signal transduction through its intracellular domain. May be required for tumorigenesis of a subset of gastric adenocarcinomas. The chain is Amphoterin-induced protein 2 from Homo sapiens (Human).